Reading from the N-terminus, the 606-residue chain is Ribonucleoprotein PTB-binding 1 (606 aa).

The disordered stretch occupies residues 1–41 (MAADVSVTHRPPLSPKSGAEVEAGDAAERRAPEEELPPLDP). At Ala-2 the chain carries N-acetylalanine. A phosphoserine mark is found at Ser-6 and Ser-14. Positions 45-60 (RKRLEHTERQFRNRRK) match the Nuclear localization signal motif. RRM domains follow at residues 59–130 (RKIL…LQPT), 132–210 (ALLC…WTDA), and 221–299 (RCLC…FCAP). Positions 307–395 (LAALIAAQAT…QTQGQKKPGI (89 aa)) are interaction with PTBP1. The segment at 391–474 (KKPGILGDSP…PPAPVGLRGS (84 aa)) is disordered. A compositionally biased stretch (low complexity) spans 453-462 (LGLGPPAAQL). Residue Thr-463 is modified to Phosphothreonine. A Phosphoserine modification is found at Ser-474. Position 488 is a phosphothreonine (Pro-488). Residues 519-564 (GLLGLSPGPNGHSHLLKVRAGGGDMQGWEAPAPQRPLTRPALPSVS) are disordered. Phosphoserine occurs at positions 562 and 567. Residues 579 to 606 (CPRPSPAQKAAMWASTPRASAATTRTPT) form a disordered region. Residues 592–606 (ASTPRASAATTRTPT) show a composition bias toward low complexity.

As to quaternary structure, interacts with PTBP1, RAVER2, VCL and ACTN1. Part of a complex containing RAVER1, VCL and ACTN1.

It localises to the nucleus. The protein localises to the cytoplasm. Cooperates with PTBP1 to modulate regulated alternative splicing events. Promotes exon skipping. Cooperates with PTBP1 to modulate switching between mutually exclusive exons during maturation of the TPM1 pre-mRNA. This Homo sapiens (Human) protein is Ribonucleoprotein PTB-binding 1 (RAVER1).